Consider the following 275-residue polypeptide: Thymidylate synthase (275 aa).

DUMP is bound at residue 138-139 (RR). C158 (nucleophile) is an active-site residue. DUMP is bound by residues 178–181 (RSCD), N189, and 219–221 (HIY). D181 contacts (6R)-5,10-methylene-5,6,7,8-tetrahydrofolate. A274 lines the (6R)-5,10-methylene-5,6,7,8-tetrahydrofolate pocket.

This sequence belongs to the thymidylate synthase family. Bacterial-type ThyA subfamily. Homodimer.

The protein resides in the cytoplasm. It catalyses the reaction dUMP + (6R)-5,10-methylene-5,6,7,8-tetrahydrofolate = 7,8-dihydrofolate + dTMP. It functions in the pathway pyrimidine metabolism; dTTP biosynthesis. Catalyzes the reductive methylation of 2'-deoxyuridine-5'-monophosphate (dUMP) to 2'-deoxythymidine-5'-monophosphate (dTMP) while utilizing 5,10-methylenetetrahydrofolate (mTHF) as the methyl donor and reductant in the reaction, yielding dihydrofolate (DHF) as a by-product. This enzymatic reaction provides an intracellular de novo source of dTMP, an essential precursor for DNA biosynthesis. In Fusobacterium nucleatum subsp. nucleatum (strain ATCC 25586 / DSM 15643 / BCRC 10681 / CIP 101130 / JCM 8532 / KCTC 2640 / LMG 13131 / VPI 4355), this protein is Thymidylate synthase.